The primary structure comprises 143 residues: Endoribonuclease YbeY (143 aa).

Zn(2+) is bound by residues H109, H113, and H119.

Belongs to the endoribonuclease YbeY family. It depends on Zn(2+) as a cofactor.

The protein resides in the cytoplasm. Its function is as follows. Single strand-specific metallo-endoribonuclease involved in late-stage 70S ribosome quality control and in maturation of the 3' terminus of the 16S rRNA. This chain is Endoribonuclease YbeY, found in Neorickettsia sennetsu (strain ATCC VR-367 / Miyayama) (Ehrlichia sennetsu).